A 347-amino-acid chain; its full sequence is Anthranilate phosphoribosyltransferase (347 aa).

5-phospho-alpha-D-ribose 1-diphosphate-binding positions include Gly88, Gly91–Asp92, Thr96, Asn98–Thr101, Lys116–Ser124, and Ser128. Residue Gly88 coordinates anthranilate. Ser100 is a Mg(2+) binding site. Asn119 serves as a coordination point for anthranilate. Arg174 is an anthranilate binding site. 2 residues coordinate Mg(2+): Asp233 and Glu234.

This sequence belongs to the anthranilate phosphoribosyltransferase family. In terms of assembly, homodimer. The cofactor is Mg(2+).

The catalysed reaction is N-(5-phospho-beta-D-ribosyl)anthranilate + diphosphate = 5-phospho-alpha-D-ribose 1-diphosphate + anthranilate. The protein operates within amino-acid biosynthesis; L-tryptophan biosynthesis; L-tryptophan from chorismate: step 2/5. In terms of biological role, catalyzes the transfer of the phosphoribosyl group of 5-phosphorylribose-1-pyrophosphate (PRPP) to anthranilate to yield N-(5'-phosphoribosyl)-anthranilate (PRA). This Rhodospirillum rubrum (strain ATCC 11170 / ATH 1.1.1 / DSM 467 / LMG 4362 / NCIMB 8255 / S1) protein is Anthranilate phosphoribosyltransferase.